Here is a 260-residue protein sequence, read N- to C-terminus: GDSL esterase/lipase WDL1 (260 aa).

The signal sequence occupies residues 1 to 35 (MLGFAPAPGRPLFVLFGSSIVQFSFSNGGWGAALA). Ser-18 acts as the Nucleophile in catalysis. Residues Asn-83 and Asn-150 are each glycosylated (N-linked (GlcNAc...) asparagine). Catalysis depends on residues Asp-191 and His-194.

Belongs to the 'GDSL' lipolytic enzyme family. Highly expressed in panicles. Expressed in shoots, mature flowers and seeds.

It localises to the endoplasmic reticulum. In terms of biological role, involved in the organization of leaf cuticle and wax crystals. This chain is GDSL esterase/lipase WDL1, found in Oryza sativa subsp. japonica (Rice).